A 179-amino-acid polypeptide reads, in one-letter code: Shikimate kinase (179 aa).

Position 14–19 (14–19 (GAGKTT)) interacts with ATP. Thr18 is a binding site for Mg(2+). The substrate site is built by Asp36, Arg60, and Gly82. Position 120 (Arg120) interacts with ATP. Arg139 serves as a coordination point for substrate.

The protein belongs to the shikimate kinase family. As to quaternary structure, monomer. It depends on Mg(2+) as a cofactor.

Its subcellular location is the cytoplasm. The enzyme catalyses shikimate + ATP = 3-phosphoshikimate + ADP + H(+). Its pathway is metabolic intermediate biosynthesis; chorismate biosynthesis; chorismate from D-erythrose 4-phosphate and phosphoenolpyruvate: step 5/7. Functionally, catalyzes the specific phosphorylation of the 3-hydroxyl group of shikimic acid using ATP as a cosubstrate. The polypeptide is Shikimate kinase (Methylococcus capsulatus (strain ATCC 33009 / NCIMB 11132 / Bath)).